Reading from the N-terminus, the 199-residue chain is Superoxide dismutase [Mn] 2 (199 aa).

Histidine 28, histidine 75, aspartate 157, and histidine 161 together coordinate Mn(2+).

The protein belongs to the iron/manganese superoxide dismutase family. It depends on Mn(2+) as a cofactor.

It catalyses the reaction 2 superoxide + 2 H(+) = H2O2 + O2. In terms of biological role, destroys superoxide anion radicals which are normally produced within the cells and which are toxic to biological systems. The sequence is that of Superoxide dismutase [Mn] 2 (sod2) from Haloferax volcanii (strain ATCC 29605 / DSM 3757 / JCM 8879 / NBRC 14742 / NCIMB 2012 / VKM B-1768 / DS2) (Halobacterium volcanii).